The chain runs to 311 residues: tRNA-cytidine(32) 2-sulfurtransferase (311 aa).

A PP-loop motif motif is present at residues 47–52 (SGGKDS). Cys-122, Cys-125, and Cys-213 together coordinate [4Fe-4S] cluster.

The protein belongs to the TtcA family. In terms of assembly, homodimer. The cofactor is Mg(2+). Requires [4Fe-4S] cluster as cofactor.

It localises to the cytoplasm. It carries out the reaction cytidine(32) in tRNA + S-sulfanyl-L-cysteinyl-[cysteine desulfurase] + AH2 + ATP = 2-thiocytidine(32) in tRNA + L-cysteinyl-[cysteine desulfurase] + A + AMP + diphosphate + H(+). It participates in tRNA modification. Catalyzes the ATP-dependent 2-thiolation of cytidine in position 32 of tRNA, to form 2-thiocytidine (s(2)C32). The sulfur atoms are provided by the cysteine/cysteine desulfurase (IscS) system. The sequence is that of tRNA-cytidine(32) 2-sulfurtransferase from Citrobacter koseri (strain ATCC BAA-895 / CDC 4225-83 / SGSC4696).